Consider the following 152-residue polypeptide: Nucleoside diphosphate kinase (152 aa).

Residues lysine 11, phenylalanine 59, arginine 87, threonine 93, arginine 104, and asparagine 114 each contribute to the ATP site. The active-site Pros-phosphohistidine intermediate is histidine 117.

It belongs to the NDK family. As to quaternary structure, homotetramer. Mg(2+) serves as cofactor.

Its subcellular location is the cytoplasm. The catalysed reaction is a 2'-deoxyribonucleoside 5'-diphosphate + ATP = a 2'-deoxyribonucleoside 5'-triphosphate + ADP. The enzyme catalyses a ribonucleoside 5'-diphosphate + ATP = a ribonucleoside 5'-triphosphate + ADP. Its function is as follows. Major role in the synthesis of nucleoside triphosphates other than ATP. The ATP gamma phosphate is transferred to the NDP beta phosphate via a ping-pong mechanism, using a phosphorylated active-site intermediate. The sequence is that of Nucleoside diphosphate kinase from Prochlorococcus marinus (strain MIT 9303).